We begin with the raw amino-acid sequence, 491 residues long: UDP-N-acetylmuramate--L-alanine ligase (491 aa).

Position 126 to 132 (126 to 132 (GTHGKTT)) interacts with ATP.

The protein belongs to the MurCDEF family.

It is found in the cytoplasm. The enzyme catalyses UDP-N-acetyl-alpha-D-muramate + L-alanine + ATP = UDP-N-acetyl-alpha-D-muramoyl-L-alanine + ADP + phosphate + H(+). It functions in the pathway cell wall biogenesis; peptidoglycan biosynthesis. Functionally, cell wall formation. The protein is UDP-N-acetylmuramate--L-alanine ligase of Shigella sonnei (strain Ss046).